The primary structure comprises 142 residues: Small ribosomal subunit protein uS12 (142 aa).

The protein belongs to the universal ribosomal protein uS12 family. Part of the 30S ribosomal subunit.

In terms of biological role, with S4 and S5 plays an important role in translational accuracy. Located at the interface of the 30S and 50S subunits. This is Small ribosomal subunit protein uS12 from Thermoplasma volcanium (strain ATCC 51530 / DSM 4299 / JCM 9571 / NBRC 15438 / GSS1).